An 869-amino-acid polypeptide reads, in one-letter code: H(+)/Cl(-) exchange transporter 6 (869 aa).

Residues 1 to 80 (MAGCRGSLCC…KKGRRYEAVK (80 aa)) are Cytoplasmic-facing. Transmembrane regions (helical) follow at residues 81–113 (WMVV…FGVV) and 128–150 (LSLL…LVLI). Positions 156-160 (GSGIP) match the Selectivity filter part_1 motif. Ser157 contacts chloride. The helical intramembrane region spans 159–166 (IPEVKCYL). 2 helical membrane-spanning segments follow: residues 176–194 (RLRT…VAGG) and 200–217 (EGPM…LPQF). A Selectivity filter part_2 motif is present at residues 198–202 (EKEGP). 2 intramembrane regions (helical) span residues 241-253 (FVSA…VAAA) and 257-265 (PIGGTLFSL). The next 3 membrane-spanning stretches (helical) occupy residues 277-294 (TWKV…LNFF), 335-364 (GFFV…YRMR), and 371-392 (KLVR…VFVA). Asn410, Asn422, and Asn432 each carry an N-linked (GlcNAc...) asparagine glycan. 2 helical membrane passes run 462 to 481 (PVTL…WTYG) and 487 to 511 (GLFV…KSYI). The short motif at 487–491 (GLFVP) is the Selectivity filter part_3 element. Phe489 provides a ligand contact to chloride. The helical intramembrane region spans 519–533 (GTFALIGAAAFLGGV). The note=Loop between two helices intramembrane region spans 534-536 (VRM). An intramembrane region (helical) is located at residues 537-548 (TISLTVILIEST). Residues 549–552 (NEIT) constitute an intramembrane region (note=Loop between two helices). A helical transmembrane segment spans residues 553-571 (YGLPIMVTLMVAKWTGDFF). Residues 572–869 (NKGIYDIHVG…ARLRQHYQTI (298 aa)) are Cytoplasmic-facing. Tyr576 is a binding site for chloride. Residues 605–662 (MEPNLTYVYPHTRIQSLVSILRTTVHHAFPVVTENRGNEKEFMKGNQLISNNIKFKKS) enclose the CBS 1 domain. 630–632 (HHA) contributes to the ATP binding site. Ser773 is subject to Phosphoserine. A CBS 2 domain is found at 807–868 (MNPSPFTVSP…QARLRQHYQT (62 aa)). 849–852 (TRHN) is a binding site for ATP.

It belongs to the chloride channel (TC 2.A.49) family. ClC-6/CLCN6 subfamily. In terms of processing, N-glycosylated on several asparagine residues. Testis, ovary, small intestine, brain and skeletal muscle. Low level expression in aortic and coronary vascular smooth muscle cells, and aortic endothelial cells. Isoform 3 is only detected in kidney.

It localises to the late endosome membrane. The catalysed reaction is 2 chloride(in) + H(+)(out) = 2 chloride(out) + H(+)(in). In terms of biological role, voltage-gated channel mediating the exchange of chloride ions against protons. Functions as antiporter and contributes to the acidification of the late endosome lumen. The CLC channel family contains both chloride channels and proton-coupled anion transporters that exchange chloride or another anion for protons. The presence of conserved gating glutamate residues is typical for family members that function as antiporters. This chain is H(+)/Cl(-) exchange transporter 6, found in Homo sapiens (Human).